Reading from the N-terminus, the 526-residue chain is D-arabinono-1,4-lactone oxidase (526 aa).

In terms of domain architecture, FAD-binding PCMH-type spans 19–193 (YSAKPERYFQ…VSATIRVVPG (175 aa)). H56 is subject to Pros-8alpha-FAD histidine.

The protein belongs to the oxygen-dependent FAD-linked oxidoreductase family. Monomer. The cofactor is FAD. The N-terminus is blocked.

Its subcellular location is the mitochondrion membrane. It carries out the reaction D-arabinono-1,4-lactone + O2 = dehydro-D-arabinono-1,4-lactone + H2O2 + H(+). It functions in the pathway cofactor biosynthesis; D-erythroascorbate biosynthesis; dehydro-D-arabinono-1,4-lactone from D-arabinose: step 2/2. In terms of biological role, can oxidize L-gulono-1,4-lactone as well as D-arabinono-1,4-lactone and L-galactono-1,4-lactone. This Saccharomyces cerevisiae (strain ATCC 204508 / S288c) (Baker's yeast) protein is D-arabinono-1,4-lactone oxidase (ALO1).